Consider the following 283-residue polypeptide: MTAQKLDGTATAAAIKGELTTRVAALHERGIRPGLGTILVGDDPGSRWYVNGKHKDCAEVGIESIRIDLPATATQDEIEDAVRVLNDDPACTGYIVQLPLPKGRDENRVLGLIDPAKDADGLHPTNLGWLVLGKAAPLPCTPNGIVELLRRHGVEIAGAEVTVVGRGVTVGRPLGLLLTRRSENATVTLCHTGTRDLAAHVRGADIVVAAAGVPGIVTGAMVKPGAAVLDVGVSRVDGKLAGDVAPEVWDVARWVSPNPGGVGPMTRAMLLSNIVAMAEQTDS.

NADP(+) is bound by residues 165 to 167 (GRG), T192, and V233.

The protein belongs to the tetrahydrofolate dehydrogenase/cyclohydrolase family. In terms of assembly, homodimer.

It catalyses the reaction (6R)-5,10-methylene-5,6,7,8-tetrahydrofolate + NADP(+) = (6R)-5,10-methenyltetrahydrofolate + NADPH. The catalysed reaction is (6R)-5,10-methenyltetrahydrofolate + H2O = (6R)-10-formyltetrahydrofolate + H(+). It participates in one-carbon metabolism; tetrahydrofolate interconversion. Catalyzes the oxidation of 5,10-methylenetetrahydrofolate to 5,10-methenyltetrahydrofolate and then the hydrolysis of 5,10-methenyltetrahydrofolate to 10-formyltetrahydrofolate. This chain is Bifunctional protein FolD 2, found in Nocardioides sp. (strain ATCC BAA-499 / JS614).